The chain runs to 38 residues: MIEPLLLGIVLGLIPITLAGLFVAAYLQYKRGNQLNLE.

Residues leucine 5 to alanine 25 traverse the membrane as a helical segment.

The protein belongs to the PetG family. The 4 large subunits of the cytochrome b6-f complex are cytochrome b6, subunit IV (17 kDa polypeptide, PetD), cytochrome f and the Rieske protein, while the 4 small subunits are PetG, PetL, PetM and PetN. The complex functions as a dimer.

Its subcellular location is the cellular thylakoid membrane. Its function is as follows. Component of the cytochrome b6-f complex, which mediates electron transfer between photosystem II (PSII) and photosystem I (PSI), cyclic electron flow around PSI, and state transitions. PetG is required for either the stability or assembly of the cytochrome b6-f complex. The chain is Cytochrome b6-f complex subunit 5 from Crocosphaera subtropica (strain ATCC 51142 / BH68) (Cyanothece sp. (strain ATCC 51142)).